Reading from the N-terminus, the 430-residue chain is Enolase (430 aa).

Residue Q163 coordinates (2R)-2-phosphoglycerate. E205 (proton donor) is an active-site residue. Mg(2+) contacts are provided by D242, E287, and D314. Residues K339, R368, S369, and K390 each contribute to the (2R)-2-phosphoglycerate site. K339 acts as the Proton acceptor in catalysis.

The protein belongs to the enolase family. The cofactor is Mg(2+).

Its subcellular location is the cytoplasm. The protein resides in the secreted. The protein localises to the cell surface. It carries out the reaction (2R)-2-phosphoglycerate = phosphoenolpyruvate + H2O. The protein operates within carbohydrate degradation; glycolysis; pyruvate from D-glyceraldehyde 3-phosphate: step 4/5. In terms of biological role, catalyzes the reversible conversion of 2-phosphoglycerate (2-PG) into phosphoenolpyruvate (PEP). It is essential for the degradation of carbohydrates via glycolysis. This Geobacillus sp. (strain WCH70) protein is Enolase.